The primary structure comprises 276 residues: MMKAEAAGSLPKTNAEAVRKKPGRKRYGWMKGLLLPAVIIAIWQVIGGLGVVSATVLPTPVTIVLTFKELILSGELFGHLQISIYRAALGFLLGAGLGLMIGILAGFSKRTELYLDPSLQMLRTVPHLAVTPLFILWFGFDEVSKILLIALGAFFPVYINTFNGIRGVDAKLFEVARVLEFKWHQQISKVILPAALPNILLGIRLSLGIAWLGLVVAELMGSSSGVGYMIMDARQFSQTNKVFAGIIIFAVVGKLTDSFVRLLERKLLKWRNSYEG.

The next 7 membrane-spanning stretches (helical) occupy residues 32–52 (GLLL…LGVV), 54–74 (ATVL…ILSG), 87–107 (AALG…LAGF), 119–141 (LQML…FGFD), 146–168 (ILLI…IRGV), 199–219 (ILLG…VAEL), and 242–262 (VFAG…FVRL). The ABC transmembrane type-1 domain maps to 80-260 (LQISIYRAAL…VVGKLTDSFV (181 aa)).

It belongs to the binding-protein-dependent transport system permease family. CysTW subfamily.

Its subcellular location is the cell membrane. Part of a binding-protein-dependent transport system for aliphatic sulfonates. Probably responsible for the translocation of the substrate across the membrane. This is Putative aliphatic sulfonates transport permease protein SsuC (ssuC) from Bacillus subtilis (strain 168).